Reading from the N-terminus, the 360-residue chain is MSIVYNKTPLLRQFFPGKASAQFFLKYECLQPSGSFKSRGIGNLIMKSAIRIQKDGKRSPQVFASSGGNAGFAAATACQRLSLPCTVVVPTATKKRMVDKIRNTGAQVIVSGAYWKEADTFLKTNVMNKIDSQVIEPIYVHPFDNPDIWEGHSSMIDEIVQDLKSQHISVNKVKGIVCSVGGGGLYNGIIQGLERYGLADRIPIVGVETNGCHVFNTSLKIGQPVQFKKITSIATSLGTAVISNQTFEYARKYNTRSVVIEDKDVIETCLKYTHQFNMVIEPACGAALHLGYNTKILENALGSKLAADDIVIIIACGGSSNTIKDLEEALDSMRKKDTPVIEVADNFIFPEKNIVNLKSA.

Ser2 carries the post-translational modification N-acetylserine. Lys37 bears the N6-(pyridoxal phosphate)lysine mark.

This sequence belongs to the serine/threonine dehydratase family. The cofactor is pyridoxal 5'-phosphate.

The protein localises to the mitochondrion. The catalysed reaction is L-serine = pyruvate + NH4(+). It catalyses the reaction L-threonine = 2-oxobutanoate + NH4(+). This is Catabolic L-serine/threonine dehydratase (CHA1) from Saccharomyces cerevisiae (strain ATCC 204508 / S288c) (Baker's yeast).